The sequence spans 500 residues: MTTREQRIEKYHADRSVYQAVPKSESLSRTAKDRKLCTSLEEAIKRSGLKDGMTVSFHHAFRGGDFVVNMVMNKIAEMGFKNLTLASSSLIDSHFPIVEHIKNGVVTKIYSSGLRGELAEQISRGLLNEPVNIHSHGGRVHLVKSGELKIDVAFLGVPCCDTFGNANGFTGKSKCGSLGYARVDAEYADKVVLLTEEFVEYPHHPISIAQDQVDLIVQVEAVGDPKKIGGGATRMTTNPRELLIARKCAEVIFASGYFKDGFSLQTGSGGAALAVTRFLEEKMRRENITADFALGGITASMVALHEAGLIKKLLDVQSFDSVAAESLARNPNHIEVSANQYANYSSKGASVERLDMVILSALEIDTKFNVNVLTGSDGVIRGASGGHCDTAASAQVAIIVAPLVRGRIPTVVENVITCVTPGENVDILVTDHGVAVNPKRPDLIEALSKTDIPLFTIEQLCERAYSITGKPKEIEFTNKPVAVVRYRDGSVIDTVYQVKD.

Oligomer with a subunit composition of (alpha,beta,gamma)6.

It is found in the cytoplasm. The catalysed reaction is citrate = oxaloacetate + acetate. The enzyme catalyses citrate + acetyl-CoA = (3S)-citryl-CoA + acetate. Its function is as follows. Represents a citrate:acetyl-ACP transferase. The sequence is that of Citrate lyase alpha chain (citF) from Haemophilus influenzae (strain ATCC 51907 / DSM 11121 / KW20 / Rd).